The sequence spans 367 residues: Cis-3-hydroxy-L-proline dehydratase (367 aa).

The Proton donor/acceptor role is filled by K165. Residues D193, E218, and D241 each coordinate Mg(2+). K265 (proton donor/acceptor) is an active-site residue.

Belongs to the mandelate racemase/muconate lactonizing enzyme family. It depends on Mg(2+) as a cofactor.

It carries out the reaction cis-3-hydroxy-L-proline = 1-pyrroline-2-carboxylate + H2O. Functionally, catalyzes the dehydration of cis-3-hydroxy-L-proline (c3LHyp) to Delta(1)-pyrroline-2-carboxylate (Pyr2C). Is likely involved in a degradation pathway that converts c3LHyp to L-proline, which allows L.aggregata to grow on c3LHyp as a sole carbon source. Also catalyzes the epimerization of c3LHyp to trans-3-hydroxy-D-proline (t3DHyp), a competing reaction occurring from the same enolate anion intermediate. L-proline, t3LHyp, t4LHyp, c4DHyp and their methylated derivatives are not substrates. The protein is Cis-3-hydroxy-L-proline dehydratase of Roseibium aggregatum (strain ATCC 25650 / DSM 13394 / JCM 20685 / NBRC 16684 / NCIMB 2208 / IAM 12614 / B1) (Stappia aggregata).